A 624-amino-acid polypeptide reads, in one-letter code: Polycystin-2-like protein 2 (624 aa).

The Cytoplasmic portion of the chain corresponds to 1 to 31 (MAEASRWHRGGASKHKLHYRKEVEITTTLQE). The chain crosses the membrane as a helical span at residues 32–52 (LLLYFIFLINLCILTFGMVNP). Over 53-276 (HMYYLNKVMS…YSVKLLRYVS (224 aa)) the chain is Extracellular. Residues asparagine 115 and asparagine 138 are each glycosylated (N-linked (GlcNAc...) asparagine). The helical transmembrane segment at 277-297 (YYDYFIASCEITFCIFLFVFT) threads the bilayer. The Cytoplasmic segment spans residues 298 to 314 (TQEVKKIKEFKSAYFKS). Residues 315-335 (IWNWLELLLLLLCFVAVSFNT) form a helical membrane-spanning segment. The Extracellular portion of the chain corresponds to 336–360 (YYNVQIFLLLGQLLKSTEKYSDFYF). Residues 361–381 (LACWHIYYNNIIAITIFFAWI) form a helical membrane-spanning segment. Residues 382 to 406 (KIFKFISFNKTMSQLSSTLSRCVKD) lie on the Cytoplasmic side of the membrane. Residues 407–427 (IVGFAIMFFIIFFAYAQLGFL) form a helical membrane-spanning segment. Over 428-469 (VFGSQVDDFSTFQNSIFAQFRIVLGDFNFAGIQQANPILGPI) the chain is Extracellular. The chain crosses the membrane as a helical span at residues 470–490 (YFITFIFFVFFVLLNMFLAII). The Cytoplasmic segment spans residues 491–624 (NDTYSEVKAD…NQVVRKVSAL (134 aa)). Residues 556-576 (ENEIQNAEQMKKWKERLEKKY) adopt a coiled-coil conformation.

It belongs to the polycystin family. As to quaternary structure, interacts with TRPC1 and TRPC5. In terms of tissue distribution, expressed only in testis. Expressed also in brain and kidney. As to expression, expressed only in transformed lymphoblasts.

The protein localises to the membrane. Exhibits a lower single conductance but no spontaneous channel activity. May function as a regulator of calcium channels or a channel component involving Ca2(+) homeostasis. The polypeptide is Polycystin-2-like protein 2 (Homo sapiens (Human)).